The sequence spans 345 residues: D-fructose 1,6-bisphosphatase class 2/sedoheptulose 1,7-bisphosphatase (345 aa).

Residues aspartate 33, glutamate 57, aspartate 97, and glutamate 100 each coordinate Mn(2+). Substrate contacts are provided by residues 100 to 102 (EGT), tyrosine 131, 176 to 178 (RPR), and 198 to 200 (DGD). Glutamate 225 serves as a coordination point for Mn(2+).

This sequence belongs to the FBPase class 2 family. In terms of assembly, homotetramer. The cofactor is Mn(2+).

It carries out the reaction beta-D-fructose 1,6-bisphosphate + H2O = beta-D-fructose 6-phosphate + phosphate. It catalyses the reaction D-sedoheptulose 1,7-bisphosphate + H2O = D-sedoheptulose 7-phosphate + phosphate. It participates in carbohydrate biosynthesis; Calvin cycle. In terms of biological role, catalyzes the hydrolysis of fructose 1,6-bisphosphate (Fru 1,6-P2) and sedoheptulose 1,7-bisphosphate (Sed 1,7-P2) to fructose 6-phosphate and sedoheptulose 7-phosphate, respectively. The chain is D-fructose 1,6-bisphosphatase class 2/sedoheptulose 1,7-bisphosphatase from Crocosphaera subtropica (strain ATCC 51142 / BH68) (Cyanothece sp. (strain ATCC 51142)).